A 490-amino-acid chain; its full sequence is Betaine aldehyde dehydrogenase (490 aa).

Residues isoleucine 27 and aspartate 93 each coordinate K(+). 150–152 (GAW) serves as a coordination point for NAD(+). Lysine 162 acts as the Charge relay system in catalysis. 176 to 179 (KPSE) contributes to the NAD(+) binding site. Valine 180 contacts K(+). 230–233 (GTDT) is an NAD(+) binding site. Leucine 246 is a K(+) binding site. Residue glutamate 252 is the Proton acceptor of the active site. 3 residues coordinate NAD(+): glycine 254, cysteine 286, and glutamate 387. Cysteine 286 serves as the catalytic Nucleophile. Cysteine 286 carries the post-translational modification Cysteine sulfenic acid (-SOH). Positions 457 and 460 each coordinate K(+). The Charge relay system role is filled by glutamate 464.

It belongs to the aldehyde dehydrogenase family. In terms of assembly, dimer of dimers. K(+) is required as a cofactor.

The enzyme catalyses betaine aldehyde + NAD(+) + H2O = glycine betaine + NADH + 2 H(+). It functions in the pathway amine and polyamine biosynthesis; betaine biosynthesis via choline pathway; betaine from betaine aldehyde: step 1/1. Functionally, involved in the biosynthesis of the osmoprotectant glycine betaine. Catalyzes the irreversible oxidation of betaine aldehyde to the corresponding acid. The polypeptide is Betaine aldehyde dehydrogenase (Pseudomonas fluorescens (strain ATCC BAA-477 / NRRL B-23932 / Pf-5)).